Consider the following 390-residue polypeptide: GTPase Obg (390 aa).

Residues 1–159 (MKFVDEATIK…RELRLELLLL (159 aa)) form the Obg domain. The region spanning 160 to 333 (ADVGMLGLPN…LCDELADFMD (174 aa)) is the OBG-type G domain. Residues 166 to 173 (GLPNAGKS), 191 to 195 (FTTLI), 213 to 216 (DIPG), 283 to 286 (NKTD), and 314 to 316 (AAV) contribute to the GTP site. 2 residues coordinate Mg(2+): Ser-173 and Thr-193.

It belongs to the TRAFAC class OBG-HflX-like GTPase superfamily. OBG GTPase family. In terms of assembly, monomer. Requires Mg(2+) as cofactor.

It localises to the cytoplasm. An essential GTPase which binds GTP, GDP and possibly (p)ppGpp with moderate affinity, with high nucleotide exchange rates and a fairly low GTP hydrolysis rate. Plays a role in control of the cell cycle, stress response, ribosome biogenesis and in those bacteria that undergo differentiation, in morphogenesis control. The chain is GTPase Obg from Aliivibrio fischeri (strain ATCC 700601 / ES114) (Vibrio fischeri).